The primary structure comprises 447 residues: Phosphoglucosamine mutase (447 aa).

Catalysis depends on serine 107, which acts as the Phosphoserine intermediate. Positions 107, 246, 248, and 250 each coordinate Mg(2+). Serine 107 is modified (phosphoserine).

This sequence belongs to the phosphohexose mutase family. The cofactor is Mg(2+). Post-translationally, activated by phosphorylation.

It carries out the reaction alpha-D-glucosamine 1-phosphate = D-glucosamine 6-phosphate. Its function is as follows. Catalyzes the conversion of glucosamine-6-phosphate to glucosamine-1-phosphate. This is Phosphoglucosamine mutase from Ralstonia pickettii (strain 12J).